A 388-amino-acid polypeptide reads, in one-letter code: uncharacterized protein (388 aa).

11 consecutive transmembrane segments (helical) span residues 18-38 (AAMF…PLYV), 42-62 (LHLS…ATLL), 89-111 (ASGL…WAIL), 116-136 (VLLG…GMWL), 145-165 (VISW…PLGL), 171-191 (AGLA…SGVI), 219-239 (TGLV…ALWF), 248-268 (GFAM…CAKF), 287-307 (TGLA…GAAI), 341-361 (AFQD…TPFI), and 365-385 (QVFL…HLLL).

Belongs to the major facilitator superfamily. YfcJ family.

It localises to the cell inner membrane. This is an uncharacterized protein from Salmonella typhimurium (strain LT2 / SGSC1412 / ATCC 700720).